Reading from the N-terminus, the 210-residue chain is ATP phosphoribosyltransferase (210 aa).

The protein belongs to the ATP phosphoribosyltransferase family. Short subfamily. In terms of assembly, heteromultimer composed of HisG and HisZ subunits.

The protein localises to the cytoplasm. It carries out the reaction 1-(5-phospho-beta-D-ribosyl)-ATP + diphosphate = 5-phospho-alpha-D-ribose 1-diphosphate + ATP. The protein operates within amino-acid biosynthesis; L-histidine biosynthesis; L-histidine from 5-phospho-alpha-D-ribose 1-diphosphate: step 1/9. Functionally, catalyzes the condensation of ATP and 5-phosphoribose 1-diphosphate to form N'-(5'-phosphoribosyl)-ATP (PR-ATP). Has a crucial role in the pathway because the rate of histidine biosynthesis seems to be controlled primarily by regulation of HisG enzymatic activity. This chain is ATP phosphoribosyltransferase (hisG), found in Synechocystis sp. (strain ATCC 27184 / PCC 6803 / Kazusa).